A 524-amino-acid polypeptide reads, in one-letter code: GMP synthase [glutamine-hydrolyzing] (524 aa).

The Glutamine amidotransferase type-1 domain occupies proline 7–serine 196. The active-site Nucleophile is cysteine 84. Active-site residues include histidine 170 and glutamate 172. In terms of domain architecture, GMPS ATP-PPase spans tryptophan 197 to arginine 398. Serine 224–alanine 230 lines the ATP pocket.

As to quaternary structure, homodimer.

The enzyme catalyses XMP + L-glutamine + ATP + H2O = GMP + L-glutamate + AMP + diphosphate + 2 H(+). It participates in purine metabolism; GMP biosynthesis; GMP from XMP (L-Gln route): step 1/1. Its function is as follows. Catalyzes the synthesis of GMP from XMP. The protein is GMP synthase [glutamine-hydrolyzing] of Nocardia farcinica (strain IFM 10152).